The following is a 370-amino-acid chain: Accessory Sec system protein translocase subunit SecY2 (370 aa).

Helical transmembrane passes span 17 to 37 (IIFT…PAIT), 65 to 85 (VFSL…LFYY), 105 to 125 (IFTL…LLSH), 134 to 154 (WLII…SDLN), 155 to 175 (MRFG…RSIM), 188 to 208 (LLIS…FIEI), 240 to 260 (IAIM…NLIV), 276 to 296 (FSTP…SYGI), and 339 to 359 (WIGA…TLLI).

The protein belongs to the SecY/SEC61-alpha family. SecY2 subfamily. Component of the accessory SecA2/SecY2 protein translocase complex required to export cell wall proteins. May form heterotrimers with SecE and SecG subunits.

It is found in the cell membrane. Part of the accessory SecA2/SecY2 system specifically required for export of possible cell wall proteins. The central subunit of a protein translocation channel. In Staphylococcus carnosus (strain TM300), this protein is Accessory Sec system protein translocase subunit SecY2.